The following is a 350-amino-acid chain: Phenylalanine--tRNA ligase alpha subunit (350 aa).

E271 is a binding site for Mg(2+).

The protein belongs to the class-II aminoacyl-tRNA synthetase family. Phe-tRNA synthetase alpha subunit type 1 subfamily. Tetramer of two alpha and two beta subunits. The cofactor is Mg(2+).

The protein resides in the cytoplasm. The catalysed reaction is tRNA(Phe) + L-phenylalanine + ATP = L-phenylalanyl-tRNA(Phe) + AMP + diphosphate + H(+). This is Phenylalanine--tRNA ligase alpha subunit from Delftia acidovorans (strain DSM 14801 / SPH-1).